The primary structure comprises 289 residues: tRNA U34 carboxymethyltransferase (289 aa).

Carboxy-S-adenosyl-L-methionine contacts are provided by residues lysine 60, tryptophan 74, lysine 79, glycine 98, aspartate 120–serine 122, valine 147–glutamate 148, tyrosine 167, and arginine 282.

The protein belongs to the class I-like SAM-binding methyltransferase superfamily. CmoB family. As to quaternary structure, homotetramer.

The enzyme catalyses carboxy-S-adenosyl-L-methionine + 5-hydroxyuridine(34) in tRNA = 5-carboxymethoxyuridine(34) in tRNA + S-adenosyl-L-homocysteine + H(+). Its function is as follows. Catalyzes carboxymethyl transfer from carboxy-S-adenosyl-L-methionine (Cx-SAM) to 5-hydroxyuridine (ho5U) to form 5-carboxymethoxyuridine (cmo5U) at position 34 in tRNAs. This chain is tRNA U34 carboxymethyltransferase, found in Campylobacter concisus (strain 13826).